Here is a 429-residue protein sequence, read N- to C-terminus: Cell cycle protein kinase spo4 (429 aa).

The region spanning 40-402 (YHVVKLVGAG…KAKTALQHEF (363 aa)) is the Protein kinase domain. ATP contacts are provided by residues 46-54 (VGAGSFSSV) and K95. The Proton acceptor role is filled by D182. T264 carries the phosphothreonine modification.

It belongs to the protein kinase superfamily. Ser/Thr protein kinase family. CDC7 subfamily. As to quaternary structure, interacts with spo6.

It is found in the nucleus. The catalysed reaction is L-seryl-[protein] + ATP = O-phospho-L-seryl-[protein] + ADP + H(+). It catalyses the reaction L-threonyl-[protein] + ATP = O-phospho-L-threonyl-[protein] + ADP + H(+). Required for the initiation of meiosis II and progression through anaphase II. The chain is Cell cycle protein kinase spo4 (spo4) from Schizosaccharomyces pombe (strain 972 / ATCC 24843) (Fission yeast).